The primary structure comprises 106 residues: Ferredoxin-2 (106 aa).

4Fe-4S ferredoxin-type domains lie at 2–29 (YVVT…YEGE) and 30–59 (NFLV…GKWL). Cys8 and Cys16 together coordinate [3Fe-4S] cluster. [4Fe-4S] cluster is bound by residues Cys20, Cys39, Cys42, and Cys45. Residue Cys49 participates in [3Fe-4S] cluster binding. The disordered stretch occupies residues 80 to 106 (ADADDWKDKPDKTGLLSENPGKGTVCH).

[4Fe-4S] cluster serves as cofactor. [3Fe-4S] cluster is required as a cofactor.

In terms of biological role, ferredoxins are iron-sulfur proteins that transfer electrons in a wide variety of metabolic reactions. This Rhodospirillum rubrum protein is Ferredoxin-2.